The following is a 296-amino-acid chain: MSISWWEISVLCHPNLEESIFWRLDQFGCSGTARETKGKSFLIRAYVPKMQAQTLDLAALSLWLKQDAILLDSPPPLTHWKLIDDEDWASSWKDHWQPTEVGDRFLIYPAWLTLPQDGDRLILRLDPGAAFGTGTHPTTQLCLESLEMRLSVPNKEIIIADIGCGSGILSIGAVLLGATKVYAVDIDPLAVDAARSNRHLNQIHPATLVINQGSVAEVLELAPEGVDGILCNILAEVIIELIPQWTALAKPHAWAILSGILIDQSQAIADTLEQYGWVVAALWKQGEWSCLHVRRS.

The S-adenosyl-L-methionine site is built by Thr-139, Gly-163, Asp-185, and Asn-232.

The protein belongs to the methyltransferase superfamily. PrmA family.

It is found in the cytoplasm. It carries out the reaction L-lysyl-[protein] + 3 S-adenosyl-L-methionine = N(6),N(6),N(6)-trimethyl-L-lysyl-[protein] + 3 S-adenosyl-L-homocysteine + 3 H(+). Functionally, methylates ribosomal protein L11. This Rippkaea orientalis (strain PCC 8801 / RF-1) (Cyanothece sp. (strain PCC 8801)) protein is Ribosomal protein L11 methyltransferase.